We begin with the raw amino-acid sequence, 201 residues long: Probable GTP-binding protein EngB (201 aa).

The EngB-type G domain maps to 22-197 (TFPEYAFIGR…LNYIESINKE (176 aa)). Residues 30 to 37 (GRSNVGKS), 57 to 61 (GKTML), 75 to 78 (DLPG), 142 to 145 (TKAD), and 175 to 178 (ITSS) contribute to the GTP site. Mg(2+)-binding residues include S37 and T59.

It belongs to the TRAFAC class TrmE-Era-EngA-EngB-Septin-like GTPase superfamily. EngB GTPase family. The cofactor is Mg(2+).

Functionally, necessary for normal cell division and for the maintenance of normal septation. The chain is Probable GTP-binding protein EngB from Bacteroides fragilis (strain YCH46).